A 904-amino-acid chain; its full sequence is Translation initiation factor IF-2 (904 aa).

Disordered stretches follow at residues 134–248 and 267–315; these read RQRN…GSHV and HLSA…FERP. The span at 136 to 177 shows a compositional bias: basic and acidic residues; sequence RNLDEQQRLAESDRVRDEEIQRKRDEEQAAKDRAEAERKAAE. Composition is skewed to low complexity over residues 178 to 230 and 285 to 303; these read EAAA…STPA and GRPG…RGSN. Residues 403 to 572 enclose the tr-type G domain; sequence TRPPVVTIMG…SLQAEVLELK (170 aa). A G1 region spans residues 412-419; that stretch reads GHVDHGKT. A GTP-binding site is contributed by 412–419; that stretch reads GHVDHGKT. Residues 437-441 form a G2 region; sequence GITQH. The segment at 458 to 461 is G3; the sequence is DTPG. GTP is bound by residues 458–462 and 512–515; these read DTPGH and NKID. Residues 512 to 515 are G4; sequence NKID. The segment at 548-550 is G5; sequence SAK.

The protein belongs to the TRAFAC class translation factor GTPase superfamily. Classic translation factor GTPase family. IF-2 subfamily.

It localises to the cytoplasm. Its function is as follows. One of the essential components for the initiation of protein synthesis. Protects formylmethionyl-tRNA from spontaneous hydrolysis and promotes its binding to the 30S ribosomal subunits. Also involved in the hydrolysis of GTP during the formation of the 70S ribosomal complex. This is Translation initiation factor IF-2 from Xanthomonas oryzae pv. oryzae (strain PXO99A).